Reading from the N-terminus, the 226-residue chain is MAALLITATDTEVGKTVLTTSLTAYWQTYRGKKGLGLMKLLQTGVGDQERYHQLFGADSSIEIKVPLWFKTPVAPPVAAAAEGKTIDLKRVWQEFCALQQRQSFVLLEALGGLGSPVTEELTVADIAGQWRLETVLVVPVKLGAIAQAVANVALARQHQIKLKGIILNCSQPISEEQLKDWTPINLIQSLTSTPVLGILPYISDLNDLEKLTQAASTLDLEKLLPL.

12 to 17 (EVGKTV) contributes to the ATP binding site. Position 16 (threonine 16) interacts with Mg(2+). Lysine 39 is an active-site residue. Residue threonine 43 participates in substrate binding. ATP-binding positions include aspartate 47, 108-111 (EALG), 168-169 (NC), and 200-202 (PYI). Residues aspartate 47 and glutamate 108 each coordinate Mg(2+).

The protein belongs to the dethiobiotin synthetase family. In terms of assembly, homodimer. Requires Mg(2+) as cofactor.

The protein localises to the cytoplasm. The catalysed reaction is (7R,8S)-7,8-diammoniononanoate + CO2 + ATP = (4R,5S)-dethiobiotin + ADP + phosphate + 3 H(+). It carries out the reaction (7R,8S)-8-amino-7-(carboxyamino)nonanoate + ATP = (4R,5S)-dethiobiotin + ADP + phosphate + H(+). It participates in cofactor biosynthesis; biotin biosynthesis; biotin from 7,8-diaminononanoate: step 1/2. In terms of biological role, catalyzes a mechanistically unusual reaction, the ATP-dependent insertion of CO2 between the N7 and N8 nitrogen atoms of 7,8-diaminopelargonic acid (DAPA, also called 7,8-diammoniononanoate) to form a ureido ring. This cyanobacterium does not encode bioA (which catalyzes the formation of the precursor for this reaction in the cannonical pathway), instead it encodes bioU, which replaces bioA and also performs the first half of the cannonical BioD reaction. Thus in this organism BioD has a different substrate. This is ATP-dependent dethiobiotin synthetase BioD from Gloeothece citriformis (strain PCC 7424) (Cyanothece sp. (strain PCC 7424)).